A 273-amino-acid polypeptide reads, in one-letter code: tRNA pseudouridine synthase A (273 aa).

Catalysis depends on aspartate 52, which acts as the Nucleophile. Tyrosine 110 contributes to the substrate binding site.

Belongs to the tRNA pseudouridine synthase TruA family. As to quaternary structure, homodimer.

The enzyme catalyses uridine(38/39/40) in tRNA = pseudouridine(38/39/40) in tRNA. Its function is as follows. Formation of pseudouridine at positions 38, 39 and 40 in the anticodon stem and loop of transfer RNAs. This is tRNA pseudouridine synthase A from Cupriavidus pinatubonensis (strain JMP 134 / LMG 1197) (Cupriavidus necator (strain JMP 134)).